Consider the following 645-residue polypeptide: Matrix metalloproteinase-24 (645 aa).

Residues 1–10 (MPRSRGGRAA) show a composition bias toward low complexity. The interval 1–26 (MPRSRGGRAAPGPPPPPPPPGQAPRW) is disordered. Residues 1–52 (MPRSRGGRAAPGPPPPPPPPGQAPRWSRWRVPGRLLLLLLPALCCLPGAARA) form the signal peptide. The segment covering 11 to 22 (PGPPPPPPPPGQ) has biased composition (pro residues). Positions 53–155 (AAAAAGAGNR…HLSRRRRNKR (103 aa)) are excised as a propeptide. Residues 53 to 602 (AAAAAGAGNR…INDVPGSVNA (550 aa)) are Extracellular-facing. Residues 137-144 (PRCGVPDH) carry the Cysteine switch motif. Positions 139 and 282 each coordinate Zn(2+). The active site involves Glu283. Zn(2+) contacts are provided by His286 and His292. The tract at residues 323–380 (QKIYGPPAEPLEPTRPLPTLPVRRIHSPSERKHERQPRPPRPPLGDRPSTPGTKPNIC) is disordered. Positions 329-341 (PAEPLEPTRPLPT) are enriched in pro residues. The span at 349–359 (SPSERKHERQP) shows a compositional bias: basic and acidic residues. Hemopexin repeat units follow at residues 377-425 (PNIC…WKGL), 426-471 (PARI…GSCL), 473-521 (REGI…KGIP), and 522-569 (QAPQ…WMGC). Cys380 and Cys569 are disulfide-bonded. The helical transmembrane segment at 603–623 (VAVVIPCILSLCILVLVYTIF) threads the bilayer. Topologically, residues 624-645 (QFKNKTGPQPVTYYKRPVQEWV) are cytoplasmic. The PDZ-binding signature appears at 643-645 (EWV).

It belongs to the peptidase M10A family. As to quaternary structure, interacts (via PDZ-binding motif) with APBA3 (via PDZ domain). Interacts with GRIP1 and GRIP2. Requires Zn(2+) as cofactor. Ca(2+) is required as a cofactor. In terms of processing, cleaved by a furin endopeptidase in the trans-Golgi network. In terms of tissue distribution, predominantly expressed in brain, kidney, pancreas and lung. Overexpressed in a series of brain tumors, including astrocytomas and glioblastomas.

Its subcellular location is the cell membrane. It localises to the golgi apparatus. It is found in the trans-Golgi network membrane. The protein resides in the secreted. The protein localises to the extracellular space. Its subcellular location is the extracellular matrix. In terms of biological role, metalloprotease that mediates cleavage of N-cadherin (CDH2) and acts as a regulator of neuro-immune interactions and neural stem cell quiescence. Involved in cell-cell interactions between nociceptive neurites and mast cells, possibly by mediating cleavage of CDH2, thereby acting as a mediator of peripheral thermal nociception and inflammatory hyperalgesia. Key regulator of neural stem cells quiescence by mediating cleavage of CDH2, affecting CDH2-mediated anchorage of neural stem cells to ependymocytes in the adult subependymal zone, leading to modulate their quiescence. May play a role in axonal growth. Able to activate progelatinase A. May also be a proteoglycanase involved in degradation of proteoglycans, such as dermatan sulfate and chondroitin sulfate proteoglycans. Cleaves partially fibronectin, but not collagen type I, nor laminin. The sequence is that of Matrix metalloproteinase-24 (MMP24) from Homo sapiens (Human).